Reading from the N-terminus, the 349-residue chain is Anthranilate phosphoribosyltransferase (349 aa).

5-phospho-alpha-D-ribose 1-diphosphate-binding positions include Gly-82, 85–86, Thr-90, 92–95, 110–118, and Gly-122; these read GD, NVST, and KHGNRSVSS. Gly-82 contacts anthranilate. A Mg(2+)-binding site is contributed by Ser-94. Asn-113 serves as a coordination point for anthranilate. Arg-168 provides a ligand contact to anthranilate. Mg(2+) contacts are provided by Asp-232 and Glu-233.

Belongs to the anthranilate phosphoribosyltransferase family. Homodimer. The cofactor is Mg(2+).

It carries out the reaction N-(5-phospho-beta-D-ribosyl)anthranilate + diphosphate = 5-phospho-alpha-D-ribose 1-diphosphate + anthranilate. The protein operates within amino-acid biosynthesis; L-tryptophan biosynthesis; L-tryptophan from chorismate: step 2/5. Functionally, catalyzes the transfer of the phosphoribosyl group of 5-phosphorylribose-1-pyrophosphate (PRPP) to anthranilate to yield N-(5'-phosphoribosyl)-anthranilate (PRA). This chain is Anthranilate phosphoribosyltransferase, found in Methanosphaera stadtmanae (strain ATCC 43021 / DSM 3091 / JCM 11832 / MCB-3).